A 729-amino-acid chain; its full sequence is Beta-galactosidase 4 (729 aa).

A signal peptide spans 1-35 (MAPAPTPAAAAGRRVAVLAAALVAASLAASVGVAN). Catalysis depends on Glu-194, which acts as the Proton donor. The Nucleophile role is filled by Glu-263.

Belongs to the glycosyl hydrolase 35 family.

Its subcellular location is the secreted. The protein resides in the extracellular space. The protein localises to the apoplast. It catalyses the reaction Hydrolysis of terminal non-reducing beta-D-galactose residues in beta-D-galactosides.. In Oryza sativa subsp. japonica (Rice), this protein is Beta-galactosidase 4.